The following is a 132-amino-acid chain: Small ribosomal subunit protein uS8c (132 aa).

This sequence belongs to the universal ribosomal protein uS8 family. In terms of assembly, part of the 30S ribosomal subunit.

It is found in the plastid. The protein resides in the chloroplast. Its function is as follows. One of the primary rRNA binding proteins, it binds directly to 16S rRNA central domain where it helps coordinate assembly of the platform of the 30S subunit. In Dioscorea elephantipes (Elephant's foot yam), this protein is Small ribosomal subunit protein uS8c (rps8).